A 505-amino-acid polypeptide reads, in one-letter code: Lysine--tRNA ligase, heat inducible (505 aa).

2 positions are modified to N6-acetyllysine: Lys-114 and Lys-156. The Mg(2+) site is built by Glu-415 and Glu-422.

This sequence belongs to the class-II aminoacyl-tRNA synthetase family. In terms of assembly, homodimer. Requires Mg(2+) as cofactor.

The protein localises to the cytoplasm. It catalyses the reaction tRNA(Lys) + L-lysine + ATP = L-lysyl-tRNA(Lys) + AMP + diphosphate. This chain is Lysine--tRNA ligase, heat inducible (lysU), found in Escherichia coli O157:H7.